The following is a 671-amino-acid chain: DNA ligase (671 aa).

Residues 32–36 (DAEYD), 81–82 (SL), and Glu113 contribute to the NAD(+) site. The active-site N6-AMP-lysine intermediate is Lys115. NAD(+) is bound by residues Arg136, Glu173, Lys290, and Lys314. The Zn(2+) site is built by Cys408, Cys411, Cys426, and Cys432. The BRCT domain occupies 593–671 (EIDSPFAGKT…ETEMLHLLGS (79 aa)).

Belongs to the NAD-dependent DNA ligase family. LigA subfamily. Mg(2+) serves as cofactor. Requires Mn(2+) as cofactor.

It catalyses the reaction NAD(+) + (deoxyribonucleotide)n-3'-hydroxyl + 5'-phospho-(deoxyribonucleotide)m = (deoxyribonucleotide)n+m + AMP + beta-nicotinamide D-nucleotide.. DNA ligase that catalyzes the formation of phosphodiester linkages between 5'-phosphoryl and 3'-hydroxyl groups in double-stranded DNA using NAD as a coenzyme and as the energy source for the reaction. It is essential for DNA replication and repair of damaged DNA. The chain is DNA ligase from Escherichia coli O6:K15:H31 (strain 536 / UPEC).